Reading from the N-terminus, the 327-residue chain is Thiamine-binding periplasmic protein (327 aa).

Positions 1 to 18 (MLKKYLPLLLLCAAPAFA) are cleaved as a signal peptide. Residues 59–60 (DG), 161–162 (ST), Trp-197, and 215–218 (YTTS) contribute to the thiamine site.

This sequence belongs to the bacterial solute-binding protein 1 family. As to quaternary structure, the complex is composed of two ATP-binding proteins (ThiQ), two transmembrane proteins (ThiP) and a solute-binding protein (ThiB).

The protein localises to the periplasm. Part of the ABC transporter complex ThiBPQ involved in thiamine import. Is also involved in thiamine pyrophosphate transport. The protein is Thiamine-binding periplasmic protein of Salmonella typhimurium (strain LT2 / SGSC1412 / ATCC 700720).